We begin with the raw amino-acid sequence, 570 residues long: Sulfite reductase [NADPH] hemoprotein beta-component 1 (570 aa).

Residues Cys-434, Cys-440, Cys-479, and Cys-483 each coordinate [4Fe-4S] cluster. Residue Cys-483 participates in siroheme binding.

Belongs to the nitrite and sulfite reductase 4Fe-4S domain family. As to quaternary structure, alpha(8)-beta(8). The alpha component is a flavoprotein, the beta component is a hemoprotein. Siroheme serves as cofactor. It depends on [4Fe-4S] cluster as a cofactor.

It carries out the reaction hydrogen sulfide + 3 NADP(+) + 3 H2O = sulfite + 3 NADPH + 4 H(+). It participates in sulfur metabolism; hydrogen sulfide biosynthesis; hydrogen sulfide from sulfite (NADPH route): step 1/1. Functionally, component of the sulfite reductase complex that catalyzes the 6-electron reduction of sulfite to sulfide. This is one of several activities required for the biosynthesis of L-cysteine from sulfate. In Klebsiella pneumoniae (strain 342), this protein is Sulfite reductase [NADPH] hemoprotein beta-component 1.